Here is a 391-residue protein sequence, read N- to C-terminus: Septation protein etd1 (391 aa).

Positions 49–68 are disordered; that stretch reads MKSYGSDITPRRPKQLGLPK.

In terms of biological role, involved in septation. The polypeptide is Septation protein etd1 (etd1) (Schizosaccharomyces pombe (strain 972 / ATCC 24843) (Fission yeast)).